A 146-amino-acid chain; its full sequence is Deoxyuridine 5'-triphosphate nucleotidohydrolase (146 aa).

Residues 66-68, Asn79, 83-85, and Lys93 each bind substrate; these read RSG and TVD.

Belongs to the dUTPase family. Mg(2+) is required as a cofactor.

The enzyme catalyses dUTP + H2O = dUMP + diphosphate + H(+). The protein operates within pyrimidine metabolism; dUMP biosynthesis; dUMP from dCTP (dUTP route): step 2/2. Its function is as follows. This enzyme is involved in nucleotide metabolism: it produces dUMP, the immediate precursor of thymidine nucleotides and it decreases the intracellular concentration of dUTP so that uracil cannot be incorporated into DNA. This is Deoxyuridine 5'-triphosphate nucleotidohydrolase from Fusobacterium nucleatum subsp. nucleatum (strain ATCC 25586 / DSM 15643 / BCRC 10681 / CIP 101130 / JCM 8532 / KCTC 2640 / LMG 13131 / VPI 4355).